Consider the following 472-residue polypeptide: Argininosuccinate lyase (472 aa).

It belongs to the lyase 1 family. Argininosuccinate lyase subfamily.

The protein resides in the cytoplasm. The enzyme catalyses 2-(N(omega)-L-arginino)succinate = fumarate + L-arginine. It participates in amino-acid biosynthesis; L-arginine biosynthesis; L-arginine from L-ornithine and carbamoyl phosphate: step 3/3. This Mycobacterium avium (strain 104) protein is Argininosuccinate lyase.